The sequence spans 354 residues: Neuronal growth regulator 1 (354 aa).

The signal sequence occupies residues Met1–Ser37. 3 Ig-like C2-type domains span residues Val38–Thr134, Pro139–Val221, and Pro225–Asn313. Cysteines 60 and 118 form a disulfide. N-linked (GlcNAc...) asparagine glycans are attached at residues Asn73 and Asn155. 2 cysteine pairs are disulfide-bonded: Cys160-Cys203 and Cys245-Cys297. Tyr187 is modified (phosphotyrosine). 4 N-linked (GlcNAc...) asparagine glycosylation sites follow: Asn275, Asn286, Asn294, and Asn307. Gly324 carries the GPI-anchor amidated glycine lipid modification. A propeptide spans Ser325–Gln354 (removed in mature form).

Belongs to the immunoglobulin superfamily. IgLON family.

The protein resides in the cell membrane. Functionally, may be involved in cell-adhesion. May function as a trans-neural growth-promoting factor in regenerative axon sprouting in the mammalian brain. The chain is Neuronal growth regulator 1 (NEGR1) from Pongo abelii (Sumatran orangutan).